A 619-amino-acid chain; its full sequence is Dihydroxy-acid dehydratase (619 aa).

Aspartate 81 lines the Mg(2+) pocket. Position 122 (cysteine 122) interacts with [2Fe-2S] cluster. 2 residues coordinate Mg(2+): aspartate 123 and lysine 124. Lysine 124 is subject to N6-carboxylysine. Cysteine 195 lines the [2Fe-2S] cluster pocket. Glutamate 491 contacts Mg(2+). Serine 517 acts as the Proton acceptor in catalysis.

It belongs to the IlvD/Edd family. Homodimer. Requires [2Fe-2S] cluster as cofactor. The cofactor is Mg(2+).

It catalyses the reaction (2R)-2,3-dihydroxy-3-methylbutanoate = 3-methyl-2-oxobutanoate + H2O. The enzyme catalyses (2R,3R)-2,3-dihydroxy-3-methylpentanoate = (S)-3-methyl-2-oxopentanoate + H2O. It functions in the pathway amino-acid biosynthesis; L-isoleucine biosynthesis; L-isoleucine from 2-oxobutanoate: step 3/4. The protein operates within amino-acid biosynthesis; L-valine biosynthesis; L-valine from pyruvate: step 3/4. Its function is as follows. Functions in the biosynthesis of branched-chain amino acids. Catalyzes the dehydration of (2R,3R)-2,3-dihydroxy-3-methylpentanoate (2,3-dihydroxy-3-methylvalerate) into 2-oxo-3-methylpentanoate (2-oxo-3-methylvalerate) and of (2R)-2,3-dihydroxy-3-methylbutanoate (2,3-dihydroxyisovalerate) into 2-oxo-3-methylbutanoate (2-oxoisovalerate), the penultimate precursor to L-isoleucine and L-valine, respectively. The sequence is that of Dihydroxy-acid dehydratase from Rhodopseudomonas palustris (strain HaA2).